We begin with the raw amino-acid sequence, 338 residues long: S-adenosylmethionine:tRNA ribosyltransferase-isomerase (338 aa).

Belongs to the QueA family. In terms of assembly, monomer.

It is found in the cytoplasm. It catalyses the reaction 7-aminomethyl-7-carbaguanosine(34) in tRNA + S-adenosyl-L-methionine = epoxyqueuosine(34) in tRNA + adenine + L-methionine + 2 H(+). The protein operates within tRNA modification; tRNA-queuosine biosynthesis. Transfers and isomerizes the ribose moiety from AdoMet to the 7-aminomethyl group of 7-deazaguanine (preQ1-tRNA) to give epoxyqueuosine (oQ-tRNA). This chain is S-adenosylmethionine:tRNA ribosyltransferase-isomerase, found in Francisella tularensis subsp. holarctica (strain FTNF002-00 / FTA).